The chain runs to 427 residues: Enolase (427 aa).

Gln-163 contacts (2R)-2-phosphoglycerate. Catalysis depends on Glu-205, which acts as the Proton donor. Asp-242, Glu-283, and Asp-310 together coordinate Mg(2+). Residues Lys-335, Arg-364, Ser-365, and Lys-386 each contribute to the (2R)-2-phosphoglycerate site. Residue Lys-335 is the Proton acceptor of the active site.

It belongs to the enolase family. Mg(2+) serves as cofactor.

The protein resides in the cytoplasm. It is found in the secreted. Its subcellular location is the cell surface. The enzyme catalyses (2R)-2-phosphoglycerate = phosphoenolpyruvate + H2O. The protein operates within carbohydrate degradation; glycolysis; pyruvate from D-glyceraldehyde 3-phosphate: step 4/5. Functionally, catalyzes the reversible conversion of 2-phosphoglycerate (2-PG) into phosphoenolpyruvate (PEP). It is essential for the degradation of carbohydrates via glycolysis. The polypeptide is Enolase (Salinispora arenicola (strain CNS-205)).